The primary structure comprises 77 residues: SS18-like protein 2 (77 aa).

Positions 50-53 match the SH2-binding motif; sequence YQHV.

This sequence belongs to the SS18 family.

This Mus musculus (Mouse) protein is SS18-like protein 2 (Ss18l2).